We begin with the raw amino-acid sequence, 222 residues long: Small ribosomal subunit protein eS1 (222 aa).

Belongs to the eukaryotic ribosomal protein eS1 family.

In Pyrobaculum islandicum (strain DSM 4184 / JCM 9189 / GEO3), this protein is Small ribosomal subunit protein eS1.